The following is a 443-amino-acid chain: COP9 signalosome complex subunit 2 (443 aa).

The PCI domain maps to 254–416 (AHTDFFEAFK…QLLELDHQKR (163 aa)).

The protein belongs to the CSN2 family. Component of the CSN complex, probably composed of cops1, cops2, cops3, cops4, cops5, cops6, cops7, cops8 and cops9.

It localises to the cytoplasm. The protein resides in the nucleus. Its function is as follows. Essential component of the COP9 signalosome complex (CSN), a complex involved in various cellular and developmental processes. The CSN complex is an essential regulator of the ubiquitin (Ubl) conjugation pathway by mediating the deneddylation of the cullin subunits of E3 ligase complexes, leading to modify the Ubl ligase activity. The polypeptide is COP9 signalosome complex subunit 2 (cops2) (Danio rerio (Zebrafish)).